An 843-amino-acid chain; its full sequence is Protein P (843 aa).

Residues 1–177 (MPLSYQHFRK…FCGSPYSWEQ (177 aa)) form a terminal protein domain (TP) region. The segment at 178-346 (DLQHGRLVIQ…YCLCHIVNLI (169 aa)) is spacer. 2 disordered regions span residues 219–258 (RKSR…VGVE) and 297–316 (SSGH…RSQS). The segment at 347-690 (DDWGPCAEHG…YLNLYPVARQ (344 aa)) is polymerase/reverse transcriptase domain (RT). The Reverse transcriptase domain occupies 357-600 (EHRIRTPRTP…YSLNFMGYVI (244 aa)). Mg(2+) is bound by residues D429, D551, and D552.

This sequence belongs to the hepadnaviridae P protein family.

It catalyses the reaction DNA(n) + a 2'-deoxyribonucleoside 5'-triphosphate = DNA(n+1) + diphosphate. The catalysed reaction is Endonucleolytic cleavage to 5'-phosphomonoester.. Its activity is regulated as follows. Activated by host HSP70 and HSP40 in vitro to be able to bind the epsilon loop of the pgRNA. Because deletion of the RNase H region renders the protein partly chaperone-independent, the chaperones may be needed indirectly to relieve occlusion of the RNA-binding site by this domain. Inhibited by several reverse-transcriptase inhibitors: Lamivudine, Adefovir and Entecavir. Functionally, multifunctional enzyme that converts the viral RNA genome into dsDNA in viral cytoplasmic capsids. This enzyme displays a DNA polymerase activity that can copy either DNA or RNA templates, and a ribonuclease H (RNase H) activity that cleaves the RNA strand of RNA-DNA heteroduplexes in a partially processive 3'- to 5'-endonucleasic mode. Neo-synthesized pregenomic RNA (pgRNA) are encapsidated together with the P protein, and reverse-transcribed inside the nucleocapsid. Initiation of reverse-transcription occurs first by binding the epsilon loop on the pgRNA genome, and is initiated by protein priming, thereby the 5'-end of (-)DNA is covalently linked to P protein. Partial (+)DNA is synthesized from the (-)DNA template and generates the relaxed circular DNA (RC-DNA) genome. After budding and infection, the RC-DNA migrates in the nucleus, and is converted into a plasmid-like covalently closed circular DNA (cccDNA). The activity of P protein does not seem to be necessary for cccDNA generation, and is presumably released from (+)DNA by host nuclear DNA repair machinery. The polypeptide is Protein P (Hepatitis B virus genotype B1 (isolate Japan/Ry30/2002) (HBV-B)).